A 300-amino-acid polypeptide reads, in one-letter code: GTPase Era (300 aa).

An Era-type G domain is found at 5-172 (HSGFVAIIGR…LTALTDALPV (168 aa)). The tract at residues 13–20 (GRPNVGKS) is G1. 13-20 (GRPNVGKS) provides a ligand contact to GTP. The interval 39–43 (QTTRN) is G2. The segment at 60–63 (DTPG) is G3. Residues 60–64 (DTPGI) and 122–125 (NKID) each bind GTP. Positions 122–125 (NKID) are G4. The segment at 151–153 (ISA) is G5. The KH type-2 domain maps to 203 to 280 (TRDEVPHAVA…NLKLWVRVQK (78 aa)).

Belongs to the TRAFAC class TrmE-Era-EngA-EngB-Septin-like GTPase superfamily. Era GTPase family. As to quaternary structure, monomer.

The protein resides in the cytoplasm. The protein localises to the cell membrane. An essential GTPase that binds both GDP and GTP, with rapid nucleotide exchange. Plays a role in 16S rRNA processing and 30S ribosomal subunit biogenesis and possibly also in cell cycle regulation and energy metabolism. This is GTPase Era from Lacticaseibacillus paracasei (strain ATCC 334 / BCRC 17002 / CCUG 31169 / CIP 107868 / KCTC 3260 / NRRL B-441) (Lactobacillus paracasei).